Reading from the N-terminus, the 966-residue chain is uncharacterized protein (966 aa).

Residues 1 to 24 (MQGNLLKVLGVLAIVATLVCFIFA) form the signal peptide. 6 helical membrane passes run 601-621 (IKAI…LGFA), 711-731 (LGLS…IVII), 743-763 (AFMA…FLLF), 785-805 (VVMM…LDFV), 822-842 (FIGT…INWF), and 855-875 (GVNM…YGYV). Positions 918 to 966 (TRQGITGRAEARLKQRNKTLDQAEKNRKNTQKEGGEKTNEEPPKPETPK) are disordered. Over residues 926 to 966 (AEARLKQRNKTLDQAEKNRKNTQKEGGEKTNEEPPKPETPK) the composition is skewed to basic and acidic residues.

This sequence belongs to the TrbL/VirB6 family.

The protein resides in the cell membrane. This is an uncharacterized protein from Rickettsia conorii (strain ATCC VR-613 / Malish 7).